A 191-amino-acid polypeptide reads, in one-letter code: Orotate phosphoribosyltransferase (191 aa).

Residue 114–122 coordinates 5-phospho-alpha-D-ribose 1-diphosphate; that stretch reads EDVVTTGKS. 2 residues coordinate orotate: Thr118 and Arg146.

Belongs to the purine/pyrimidine phosphoribosyltransferase family. PyrE subfamily. Homodimer. Requires Mg(2+) as cofactor.

It carries out the reaction orotidine 5'-phosphate + diphosphate = orotate + 5-phospho-alpha-D-ribose 1-diphosphate. The protein operates within pyrimidine metabolism; UMP biosynthesis via de novo pathway; UMP from orotate: step 1/2. In terms of biological role, catalyzes the transfer of a ribosyl phosphate group from 5-phosphoribose 1-diphosphate to orotate, leading to the formation of orotidine monophosphate (OMP). The chain is Orotate phosphoribosyltransferase from Clostridium botulinum (strain Langeland / NCTC 10281 / Type F).